The chain runs to 97 residues: Aspartyl/glutamyl-tRNA(Asn/Gln) amidotransferase subunit C (97 aa).

The protein belongs to the GatC family. Heterotrimer of A, B and C subunits.

It carries out the reaction L-glutamyl-tRNA(Gln) + L-glutamine + ATP + H2O = L-glutaminyl-tRNA(Gln) + L-glutamate + ADP + phosphate + H(+). The enzyme catalyses L-aspartyl-tRNA(Asn) + L-glutamine + ATP + H2O = L-asparaginyl-tRNA(Asn) + L-glutamate + ADP + phosphate + 2 H(+). Its function is as follows. Allows the formation of correctly charged Asn-tRNA(Asn) or Gln-tRNA(Gln) through the transamidation of misacylated Asp-tRNA(Asn) or Glu-tRNA(Gln) in organisms which lack either or both of asparaginyl-tRNA or glutaminyl-tRNA synthetases. The reaction takes place in the presence of glutamine and ATP through an activated phospho-Asp-tRNA(Asn) or phospho-Glu-tRNA(Gln). In Clostridium botulinum (strain Eklund 17B / Type B), this protein is Aspartyl/glutamyl-tRNA(Asn/Gln) amidotransferase subunit C.